The chain runs to 145 residues: 3-dehydroquinate dehydratase (145 aa).

Tyr24 acts as the Proton acceptor in catalysis. Residues Asn75, His81, and Asp88 each coordinate substrate. The Proton donor role is filled by His101. Substrate-binding positions include 102–103 (IS) and Arg112.

It belongs to the type-II 3-dehydroquinase family. In terms of assembly, homododecamer.

It carries out the reaction 3-dehydroquinate = 3-dehydroshikimate + H2O. The protein operates within metabolic intermediate biosynthesis; chorismate biosynthesis; chorismate from D-erythrose 4-phosphate and phosphoenolpyruvate: step 3/7. Its function is as follows. Catalyzes a trans-dehydration via an enolate intermediate. The protein is 3-dehydroquinate dehydratase of Corynebacterium glutamicum (strain R).